We begin with the raw amino-acid sequence, 3354 residues long: Cadherin-23 (3354 aa).

Positions 1-23 are cleaved as a signal peptide; sequence MGRHVATSCHVAWLLVLISGCWG. Residues 24-3064 are Extracellular-facing; sequence QVNRLPFFTN…SVRLPDDMSA (3041 aa). Cadherin domains lie at 34–132, 133–236, 237–348, 349–460, 461–561, 562–671, 672–784, 779–890, 891–995, 996–1102, 1103–1208, 1210–1313, 1314–1418, 1420–1527, 1529–1634, 1635–1744, 1745–1851, 1852–1959, 1960–2069, 2070–2174, 2175–2293, 2297–2402, 2403–2509, 2510–2611, 2614–2722, 2729–2846, and 2847–2975; these read HFFD…APTF, HNQP…DPIF, INLP…APEF, NSSE…RPIF, SQPL…VPTF, QKDA…PPTF, SKPA…APYY, KDAP…DPTF, QNLP…TPTF, FPAV…RPIF, LQSS…APVF, QQQY…AVQF, SNAS…SPRF, FTSD…PPVI, SPFG…APMF, QQPH…VPTF, PRDY…DPVL, LNLP…HPLF, TKST…RPTF, SPAT…RPEF, LNPI…TPQF, GITY…NPIF, DQPS…RPQF, SKPQ…RPVF, PPNG…EPLF, SPQY…PPRF, and TKAE…EEEF. N-linked (GlcNAc...) asparagine glycans are attached at residues Asn155 and Asn206. Residues Asn349, Asn393, Asn434, Asn466, Asn472, Asn652, Asn694, Asn765, Asn810, Asn827, Asn941, Asn1001, Asn1018, Asn1171, Asn1282, Asn1315, Asn1473, Asn1534, Asn1651, Asn1667, Asn1818, Asn1857, Asn1889, Asn1902, Asn2013, Asn2050, Asn2129, Asn2168, Asn2195, Asn2263, Asn2357, and Asn2369 are each glycosylated (N-linked (GlcNAc...) asparagine). Residues Asn2616, Asn2749, Asn2808, Asn2877, Asn2896, Asn2941, and Asn2981 are each glycosylated (N-linked (GlcNAc...) asparagine). A helical transmembrane segment spans residues 3065–3085; sequence LQMAIIVLAILLFLAAMLFVL. Residues 3086–3354 are Cytoplasmic-facing; sequence MNWYYRTVHK…METPLEITEL (269 aa).

In terms of assembly, antiparallel heterodimer with PCDH15. Interacts with USH1C and USH1G. Particularly strong expression in the retina. Found also in the cochlea.

The protein localises to the cell membrane. In terms of biological role, cadherins are calcium-dependent cell adhesion proteins. They preferentially interact with themselves in a homophilic manner in connecting cells. CDH23 is required for establishing and/or maintaining the proper organization of the stereocilia bundle of hair cells in the cochlea and the vestibule during late embryonic/early postnatal development. It is part of the functional network formed by USH1C, USH1G, CDH23 and MYO7A that mediates mechanotransduction in cochlear hair cells. Required for normal hearing. The sequence is that of Cadherin-23 from Homo sapiens (Human).